Here is a 317-residue protein sequence, read N- to C-terminus: Melanocyte-stimulating hormone receptor (317 aa).

Residues 1 to 37 (MPMQGAQKRLLGSLNSTPTATPNLGLAANHTGAPCLE) are Extracellular-facing. N-linked (GlcNAc...) asparagine glycosylation is present at Asn29. The helical transmembrane segment at 38-63 (VSIPDGLFLSLGLVSLVENVLVVAAI) threads the bilayer. The Cytoplasmic portion of the chain corresponds to 64–72 (AKNRNLHSP). The chain crosses the membrane as a helical span at residues 73–93 (MYCFICCLALSDLLVSSSNML). The Extracellular segment spans residues 94-118 (ETAVILLLEAGALATRASVVQQLQN). A helical membrane pass occupies residues 119–140 (TIDVLTCSSMLCSLCFLGAIAV). Topologically, residues 141-163 (DRHVSIFYALRYHSIMTLARARR) are cytoplasmic. Residues 164–183 (AIAAIWVASVLSSTLFIAYC) traverse the membrane as a helical segment. Residues 184–191 (DHAXVLLC) lie on the Extracellular side of the membrane. Residues 192 to 211 (LVVFFLAMLVLMAVLYVHML) form a helical membrane-spanning segment. The Cytoplasmic segment spans residues 212–240 (ARACQHAQGITRLHQRQPPAHQGFGFRGA). The chain crosses the membrane as a helical span at residues 241–266 (ATLTILLGIFFLCWGPFFLHLTLVVL). The Extracellular segment spans residues 267 to 279 (CPQHLTCSCIFKN). The chain crosses the membrane as a helical span at residues 280-300 (FKVFLTLIICSTIIDPLIYAF). Over 301–317 (RSQELRRTLKELLLCSW) the chain is Cytoplasmic. Cys315 is lipidated: S-palmitoyl cysteine.

This sequence belongs to the G-protein coupled receptor 1 family. As to quaternary structure, interacts with MGRN1, but does not undergo MGRN1-mediated ubiquitination; this interaction competes with GNAS-binding and thus inhibits agonist-induced cAMP production. Interacts with OPN3; the interaction results in a decrease in MC1R-mediated cAMP signaling and ultimately a decrease in melanin production in melanocytes.

It localises to the cell membrane. Functionally, receptor for MSH (alpha, beta and gamma) and ACTH. The activity of this receptor is mediated by G proteins which activate adenylate cyclase. Mediates melanogenesis, the production of eumelanin (black/brown) and phaeomelanin (red/yellow), via regulation of cAMP signaling in melanocytes. The chain is Melanocyte-stimulating hormone receptor (MC1R) from Ateles paniscus (Black spider monkey).